The primary structure comprises 258 residues: Ribosomal RNA small subunit methyltransferase J (258 aa).

S-adenosyl-L-methionine is bound by residues 107-108 (RD), 123-124 (ER), 159-160 (SS), and Asp-177.

The protein belongs to the methyltransferase superfamily. RsmJ family.

It is found in the cytoplasm. The catalysed reaction is guanosine(1516) in 16S rRNA + S-adenosyl-L-methionine = N(2)-methylguanosine(1516) in 16S rRNA + S-adenosyl-L-homocysteine + H(+). Functionally, specifically methylates the guanosine in position 1516 of 16S rRNA. The protein is Ribosomal RNA small subunit methyltransferase J of Shewanella sediminis (strain HAW-EB3).